We begin with the raw amino-acid sequence, 128 residues long: MFWKLPLLLGLLALGPHVCSWMFEDIGKTGQEFSMCVEFAIHHFNEHQPDENAYKLLWVRRSQHKKFSLTYLMDLHLGRTICKKHDEDIDNCPLQEGPEGKKVNCTFIVDSRPLYTKFTLLNSTCQQI.

An N-terminal signal peptide occupies residues 1-20 (MFWKLPLLLGLLALGPHVCS). An intrachain disulfide couples Cys82 to Cys92. A glycan (N-linked (GlcNAc...) asparagine) is linked at Asn104. A disulfide bond links Cys105 and Cys125.

This sequence belongs to the cystatin family.

It localises to the secreted. The protein is Probable cystatin-15 of Bos taurus (Bovine).